The sequence spans 320 residues: MQTRNTFSWIREEITRSISVLLMIYIITWASISSAYPIFAQQNYENPREATGRIVCANCHLASKPVDIEVPQAVLPDTVFEAVVKIPYDMQLKQVLANGKKGALNVGAVLILPEGFELAPPDRISPEMKEKIGNLSFQNYRPNKKNILVIGPVPGQKYSEITFPILAPDPATNKDVHFLKYPIYVGGNRGRGQIYPDGSKSNNTVYNATAGGIINKILRKEKGGYEITIVDASNERQVIDIIPRGLELLVSEGESIKLDQPLTSNPNVGGFGQGDAEIVLQDPLRVQGLLFFLGSVVLAQIFLVLKKKQFEKVQLSEMNF.

Residues 1–35 (MQTRNTFSWIREEITRSISVLLMIYIITWASISSA) form the signal peptide. Tyr36, Cys56, Cys59, and His60 together coordinate heme. Residues 286–306 (VQGLLFFLGSVVLAQIFLVLK) form a helical membrane-spanning segment.

It belongs to the cytochrome f family. In terms of assembly, the 4 large subunits of the cytochrome b6-f complex are cytochrome b6, subunit IV (17 kDa polypeptide, petD), cytochrome f and the Rieske protein, while the 4 small subunits are PetG, PetL, PetM and PetN. The complex functions as a dimer. It depends on heme as a cofactor.

It localises to the plastid. The protein localises to the chloroplast thylakoid membrane. In terms of biological role, component of the cytochrome b6-f complex, which mediates electron transfer between photosystem II (PSII) and photosystem I (PSI), cyclic electron flow around PSI, and state transitions. This chain is Cytochrome f, found in Lobularia maritima (Sweet alyssum).